The primary structure comprises 360 residues: Peptide chain release factor 1 (360 aa).

N5-methylglutamine is present on glutamine 235. Positions 280-293 (DKQSHEQQAKEAAT) are enriched in basic and acidic residues. The interval 280-300 (DKQSHEQQAKEAATRKSLIGS) is disordered.

The protein belongs to the prokaryotic/mitochondrial release factor family. In terms of processing, methylated by PrmC. Methylation increases the termination efficiency of RF1.

The protein localises to the cytoplasm. Its function is as follows. Peptide chain release factor 1 directs the termination of translation in response to the peptide chain termination codons UAG and UAA. The sequence is that of Peptide chain release factor 1 from Paraburkholderia phytofirmans (strain DSM 17436 / LMG 22146 / PsJN) (Burkholderia phytofirmans).